The chain runs to 424 residues: Serine--tRNA ligase (424 aa).

Thr229–Glu231 is a binding site for L-serine. Arg260–Glu262 contributes to the ATP binding site. Glu283 provides a ligand contact to L-serine. Glu347–Ser350 serves as a coordination point for ATP. L-serine is bound at residue Ser383.

This sequence belongs to the class-II aminoacyl-tRNA synthetase family. Type-1 seryl-tRNA synthetase subfamily. As to quaternary structure, homodimer. The tRNA molecule binds across the dimer.

The protein localises to the cytoplasm. The enzyme catalyses tRNA(Ser) + L-serine + ATP = L-seryl-tRNA(Ser) + AMP + diphosphate + H(+). It catalyses the reaction tRNA(Sec) + L-serine + ATP = L-seryl-tRNA(Sec) + AMP + diphosphate + H(+). It functions in the pathway aminoacyl-tRNA biosynthesis; selenocysteinyl-tRNA(Sec) biosynthesis; L-seryl-tRNA(Sec) from L-serine and tRNA(Sec): step 1/1. Functionally, catalyzes the attachment of serine to tRNA(Ser). Is also able to aminoacylate tRNA(Sec) with serine, to form the misacylated tRNA L-seryl-tRNA(Sec), which will be further converted into selenocysteinyl-tRNA(Sec). The protein is Serine--tRNA ligase of Gluconacetobacter diazotrophicus (strain ATCC 49037 / DSM 5601 / CCUG 37298 / CIP 103539 / LMG 7603 / PAl5).